The following is a 134-amino-acid chain: Small ribosomal subunit protein uS9 (134 aa).

A disordered region spans residues 113 to 134 (REVERKKYGLKKARRAPQFSKR). Residues 120–134 (YGLKKARRAPQFSKR) are compositionally biased toward basic residues.

The protein belongs to the universal ribosomal protein uS9 family.

The polypeptide is Small ribosomal subunit protein uS9 (rpsI) (Thermotoga maritima (strain ATCC 43589 / DSM 3109 / JCM 10099 / NBRC 100826 / MSB8)).